Here is a 191-residue protein sequence, read N- to C-terminus: Fe/S biogenesis protein NfuA (191 aa).

2 residues coordinate [4Fe-4S] cluster: Cys149 and Cys152.

The protein belongs to the NfuA family. In terms of assembly, homodimer. Requires [4Fe-4S] cluster as cofactor.

Its function is as follows. Involved in iron-sulfur cluster biogenesis. Binds a 4Fe-4S cluster, can transfer this cluster to apoproteins, and thereby intervenes in the maturation of Fe/S proteins. Could also act as a scaffold/chaperone for damaged Fe/S proteins. The protein is Fe/S biogenesis protein NfuA of Hamiltonella defensa subsp. Acyrthosiphon pisum (strain 5AT).